The following is a 222-amino-acid chain: MVLFMKTVQRPEHISLKSCIPFKSLQRQGIVFRLSVRMVMLADDHSISDSALSDSDKNAFKDKNNDFWKAIKNAKNASDINFSDYSIFFAAGGHGTLFDFPSATNLHKGAAKIYSMGGVIAAVCHGPVILPCIKDSTGFSIVKGKTVTAFNEIAEQQMNLMPTFEKYHFKTLNKLFQEAGSNFVDPQEPFDDFVKTDGKLVTGANPASAASTAKAALNSLNS.

Active-site residues include cysteine 124, histidine 125, and glutamate 155.

The protein belongs to the peptidase C56 family. HSP31-like subfamily.

Its subcellular location is the cytoplasm. The enzyme catalyses methylglyoxal + H2O = (R)-lactate + H(+). Catalyzes the conversion of methylglyoxal (MG) to D-lactate in a single glutathione (GSH)-independent step. May play a role in detoxifying endogenously produced glyoxals. Involved in protection against reactive oxygen species (ROS). The protein is Probable glutathione-independent glyoxalase hsp3104 of Schizosaccharomyces pombe (strain 972 / ATCC 24843) (Fission yeast).